The sequence spans 345 residues: Selenide, water dikinase (345 aa).

Residue cysteine 16 is part of the active site. ATP contacts are provided by residues lysine 19 and 45–47 (TSE). Mg(2+) is bound at residue aspartate 48. Residues aspartate 65, aspartate 88, and 136–138 (GHT) each bind ATP. Aspartate 88 provides a ligand contact to Mg(2+). Aspartate 224 serves as a coordination point for Mg(2+).

The protein belongs to the selenophosphate synthase 1 family. Class I subfamily. Homodimer. It depends on Mg(2+) as a cofactor.

It catalyses the reaction hydrogenselenide + ATP + H2O = selenophosphate + AMP + phosphate + 2 H(+). Its function is as follows. Synthesizes selenophosphate from selenide and ATP. This Aliarcobacter butzleri (strain RM4018) (Arcobacter butzleri) protein is Selenide, water dikinase.